We begin with the raw amino-acid sequence, 562 residues long: MILTENLNVLWASVLFETLYRLGLRTVVLSPGSRSGPLAIAAAAHPHLEALPILDERSAAFFALGLVQQQGRPVALLCTSGTAAANFYPAIIEASLSHLPLIVLSADRPPELRFCQAGQAIDQVHLYGHAVRHYRELSLPELPLLPYLRQTLCHSWQTALWPDPGPVHLNIPLRDPLDLRSQANFHGELPKGFFDQVQPFVPPRVVTSLPWQTWQQMQRGLIIAGPSHGVDPLAEAAAIDRLSRFLQWPVLADALSSARGLPHGISHYDLLLRDAHLREYLRPEAVIQLGPLPTSKALREWLSACDPLIWCLDPTGDNNNPLHGRCQMLAIAPQAVDCPPDPLPPNPYLKDWQDQDQRVREQLKRTFEAIDWFSEVKLIYHLPQWLPSQTAIFVASSMPVRDVESVWQGSDRRHRFYFNRGANGIDGTLSTALGVAHRGQPTLLITGDLACLHDTNGWLITPQFQGCLTVLLINNRGGGIFEHLPIRQFDPPFEAFFATPQQVDFSYLAAAYGIPYHCLKDWADVEAQLRQTPWPKIRLLEFRSDRHRNAQWRQQVLAHLGG.

It belongs to the TPP enzyme family. MenD subfamily. In terms of assembly, homodimer. Requires Mg(2+) as cofactor. The cofactor is Mn(2+). Thiamine diphosphate serves as cofactor.

The enzyme catalyses isochorismate + 2-oxoglutarate + H(+) = 5-enolpyruvoyl-6-hydroxy-2-succinyl-cyclohex-3-ene-1-carboxylate + CO2. Its pathway is quinol/quinone metabolism; 1,4-dihydroxy-2-naphthoate biosynthesis; 1,4-dihydroxy-2-naphthoate from chorismate: step 2/7. It participates in cofactor biosynthesis; phylloquinone biosynthesis. In terms of biological role, catalyzes the thiamine diphosphate-dependent decarboxylation of 2-oxoglutarate and the subsequent addition of the resulting succinic semialdehyde-thiamine pyrophosphate anion to isochorismate to yield 2-succinyl-5-enolpyruvyl-6-hydroxy-3-cyclohexene-1-carboxylate (SEPHCHC). The chain is 2-succinyl-5-enolpyruvyl-6-hydroxy-3-cyclohexene-1-carboxylate synthase from Thermosynechococcus vestitus (strain NIES-2133 / IAM M-273 / BP-1).